Here is a 310-residue protein sequence, read N- to C-terminus: Methionyl-tRNA formyltransferase (310 aa).

111-114 (SLLP) is a (6S)-5,6,7,8-tetrahydrofolate binding site.

Belongs to the Fmt family.

It catalyses the reaction L-methionyl-tRNA(fMet) + (6R)-10-formyltetrahydrofolate = N-formyl-L-methionyl-tRNA(fMet) + (6S)-5,6,7,8-tetrahydrofolate + H(+). Its function is as follows. Attaches a formyl group to the free amino group of methionyl-tRNA(fMet). The formyl group appears to play a dual role in the initiator identity of N-formylmethionyl-tRNA by promoting its recognition by IF2 and preventing the misappropriation of this tRNA by the elongation apparatus. The chain is Methionyl-tRNA formyltransferase from Rhodopseudomonas palustris (strain BisB5).